The sequence spans 972 residues: Hemoglobin and hemoglobin-haptoglobin-binding protein (972 aa).

The signal sequence occupies residues Met1 to Ala22. The TonB box motif lies at Glu32–Glu39. One can recognise a TBDR plug domain in the interval Ser38–Lys167. A TBDR beta-barrel domain is found at Asp175–Phe972. The TonB C-terminal box signature appears at Lys955 to Phe972.

Belongs to the TonB-dependent receptor family. Hemoglobin/haptoglobin binding protein subfamily.

The protein resides in the cell outer membrane. Acts as a receptor for hemoglobin or the hemoglobin/haptoglobin complex of the host and is required for heme uptake. May be involved in virulence. This is Hemoglobin and hemoglobin-haptoglobin-binding protein from Haemophilus ducreyi (strain 35000HP / ATCC 700724).